A 449-amino-acid chain; its full sequence is Tubulin alpha chain (449 aa).

Q11 lines the GTP pocket. At K40 the chain carries N6-acetyllysine. Residues E71, S140, G144, T145, T179, N206, and N228 each coordinate GTP. Residue E71 participates in Mg(2+) binding. Residue E254 is part of the active site.

Belongs to the tubulin family. Dimer of alpha and beta chains. A typical microtubule is a hollow water-filled tube with an outer diameter of 25 nm and an inner diameter of 15 nM. Alpha-beta heterodimers associate head-to-tail to form protofilaments running lengthwise along the microtubule wall with the beta-tubulin subunit facing the microtubule plus end conferring a structural polarity. Microtubules usually have 13 protofilaments but different protofilament numbers can be found in some organisms and specialized cells. Requires Mg(2+) as cofactor. Undergoes a tyrosination/detyrosination cycle, the cyclic removal and re-addition of a C-terminal tyrosine residue by the enzymes tubulin tyrosine carboxypeptidase (TTCP) and tubulin tyrosine ligase (TTL), respectively. In terms of processing, some glutamate residues at the C-terminus are either polyglutamylated or polyglycylated. These 2 modifications occur exclusively on glutamate residues and result in either polyglutamate or polyglycine chains on the gamma-carboxyl group. Both modifications can coexist on the same protein on adjacent residues, and lowering polyglycylation levels increases polyglutamylation, and reciprocally. The precise function of such modifications is still unclear but they regulate the assembly and dynamics of axonemal microtubules. Post-translationally, acetylation of alpha chains at Lys-40 stabilizes microtubules and affects affinity and processivity of microtubule motors. This modification has a role in multiple cellular functions, ranging from cell motility, cell cycle progression or cell differentiation to intracellular trafficking and signaling.

The protein localises to the cytoplasm. It is found in the cytoskeleton. It carries out the reaction GTP + H2O = GDP + phosphate + H(+). Functionally, tubulin is the major constituent of microtubules, a cylinder consisting of laterally associated linear protofilaments composed of alpha- and beta-tubulin heterodimers. Microtubules grow by the addition of GTP-tubulin dimers to the microtubule end, where a stabilizing cap forms. Below the cap, tubulin dimers are in GDP-bound state, owing to GTPase activity of alpha-tubulin. This is Tubulin alpha chain from Tetrahymena thermophila.